The following is a 276-amino-acid chain: Probable NADH-ubiquinone oxidoreductase 30.4 kDa subunit, mitochondrial (276 aa).

The disordered stretch occupies residues Glu-248–Lys-276.

It belongs to the complex I 30 kDa subunit family. As to quaternary structure, complex I is composed of about 30 different subunits. This is a component of the iron-sulfur protein fraction.

It localises to the mitochondrion inner membrane. The catalysed reaction is a ubiquinone + NADH + 5 H(+)(in) = a ubiquinol + NAD(+) + 4 H(+)(out). Core subunit of the mitochondrial membrane respiratory chain NADH dehydrogenase (Complex I) that is believed to belong to the minimal assembly required for catalysis. Complex I functions in the transfer of electrons from NADH to the respiratory chain. The immediate electron acceptor for the enzyme is believed to be ubiquinone. Essential for N-alkane assimilation. The protein is Probable NADH-ubiquinone oxidoreductase 30.4 kDa subunit, mitochondrial (ALI1) of Candida maltosa (Yeast).